The sequence spans 165 residues: Protein-export protein SecB (165 aa).

Belongs to the SecB family. In terms of assembly, homotetramer, a dimer of dimers. One homotetramer interacts with 1 SecA dimer.

It is found in the cytoplasm. In terms of biological role, one of the proteins required for the normal export of preproteins out of the cell cytoplasm. It is a molecular chaperone that binds to a subset of precursor proteins, maintaining them in a translocation-competent state. It also specifically binds to its receptor SecA. The protein is Protein-export protein SecB of Ruegeria pomeroyi (strain ATCC 700808 / DSM 15171 / DSS-3) (Silicibacter pomeroyi).